The primary structure comprises 157 residues: Eukaryotic translation initiation factor 5A-2 (157 aa).

N-acetylserine is present on Ser-2. The residue at position 2 (Ser-2) is a Phosphoserine. Phosphothreonine is present on Thr-7. Lys-51 bears the Hypusine mark. Residue Ser-74 is modified to Phosphoserine. Lys-86 participates in a covalent cross-link: Glycyl lysine isopeptide (Lys-Gly) (interchain with G-Cter in ubiquitin).

Belongs to the eIF-5A family. As to quaternary structure, homodimer. Binds to 80S ribosomes. Actively translating ribosomes show mutually exclusive binding of eIF5a (HYP2 or ANB1) and EFT1/eEF2. Interacts with DYS1 and LIA1. In terms of processing, lys-51 undergoes hypusination, a unique post-translational modification that consists in the addition of a butylamino group from spermidine to lysine side chain, leading to the formation of the unusual amino acid hypusine. eIF-5As are the only known proteins to undergo this modification, which is essential for their function.

It localises to the cytoplasm. Its function is as follows. Translation factor that promotes translation elongation and termination, particularly upon ribosome stalling at specific amino acid sequence contexts. Binds between the exit (E) and peptidyl (P) site of the ribosome and promotes rescue of stalled ribosome: specifically required for efficient translation of polyproline-containing peptides as well as other motifs that stall the ribosome. Acts as ribosome quality control (RQC) cofactor by joining the RQC complex to facilitate peptidyl transfer during CAT tailing step. Involved in actin dynamics and cell cycle progression, mRNA decay and probably in a pathway involved in stress response and maintenance of cell wall integrity. This chain is Eukaryotic translation initiation factor 5A-2 (ANB1), found in Saccharomyces cerevisiae (strain ATCC 204508 / S288c) (Baker's yeast).